The chain runs to 839 residues: Protein translocase subunit SecA (839 aa).

Residues Q85, 103 to 107 (GEGKT), and D492 each bind ATP. The interval 794–820 (EINYSGPDAGDTKKEPVRRKEKKIGRN) is disordered. Zn(2+) is bound by residues C823, C825, C834, and C835.

It belongs to the SecA family. In terms of assembly, monomer and homodimer. Part of the essential Sec protein translocation apparatus which comprises SecA, SecYEG and auxiliary proteins SecDF. Other proteins may also be involved. Requires Zn(2+) as cofactor.

The protein resides in the cell membrane. It localises to the cytoplasm. It catalyses the reaction ATP + H2O + cellular proteinSide 1 = ADP + phosphate + cellular proteinSide 2.. In terms of biological role, part of the Sec protein translocase complex. Interacts with the SecYEG preprotein conducting channel. Has a central role in coupling the hydrolysis of ATP to the transfer of proteins into and across the cell membrane, serving as an ATP-driven molecular motor driving the stepwise translocation of polypeptide chains across the membrane. The polypeptide is Protein translocase subunit SecA (Clostridium acetobutylicum (strain ATCC 824 / DSM 792 / JCM 1419 / IAM 19013 / LMG 5710 / NBRC 13948 / NRRL B-527 / VKM B-1787 / 2291 / W)).